Here is a 92-residue protein sequence, read N- to C-terminus: Phosphoribosyl-ATP pyrophosphatase (92 aa).

The protein belongs to the PRA-PH family.

Its subcellular location is the cytoplasm. The enzyme catalyses 1-(5-phospho-beta-D-ribosyl)-ATP + H2O = 1-(5-phospho-beta-D-ribosyl)-5'-AMP + diphosphate + H(+). It participates in amino-acid biosynthesis; L-histidine biosynthesis; L-histidine from 5-phospho-alpha-D-ribose 1-diphosphate: step 2/9. This Leptospira interrogans serogroup Icterohaemorrhagiae serovar copenhageni (strain Fiocruz L1-130) protein is Phosphoribosyl-ATP pyrophosphatase.